A 491-amino-acid polypeptide reads, in one-letter code: N-succinylglutamate 5-semialdehyde dehydrogenase (491 aa).

225 to 230 (GSSTVG) contacts NAD(+). Residues glutamate 248 and cysteine 282 contribute to the active site.

It belongs to the aldehyde dehydrogenase family. AstD subfamily.

The catalysed reaction is N-succinyl-L-glutamate 5-semialdehyde + NAD(+) + H2O = N-succinyl-L-glutamate + NADH + 2 H(+). It functions in the pathway amino-acid degradation; L-arginine degradation via AST pathway; L-glutamate and succinate from L-arginine: step 4/5. In terms of biological role, catalyzes the NAD-dependent reduction of succinylglutamate semialdehyde into succinylglutamate. In Marinobacter nauticus (strain ATCC 700491 / DSM 11845 / VT8) (Marinobacter aquaeolei), this protein is N-succinylglutamate 5-semialdehyde dehydrogenase.